The sequence spans 398 residues: uncharacterized protein (398 aa).

6 helical membrane-spanning segments follow: residues 37-57 (LVILTIVAFFWGLLGVIFVQF), 92-112 (IFNAIFWLTQILFNVPFFIFG), 122-142 (LLTLYFVAVSNLFGFFFSYIP), 186-206 (LFYGLIWGFLQAVFYSVILII), 228-248 (IGGILMLINTVSFIIGYVIGT), and 268-288 (FGVAFFLSPNLVFTLLMNIVL).

It localises to the cell membrane. This is an uncharacterized protein from Mycoplasma genitalium (strain ATCC 33530 / DSM 19775 / NCTC 10195 / G37) (Mycoplasmoides genitalium).